The chain runs to 59 residues: UPF0391 membrane protein lpl2443 (59 aa).

2 helical membrane passes run 5 to 25 (ALIFFIIAIIAAAFGFGGIAV) and 30 to 50 (IAKILFFLFLVMFVIFLIMGL).

It belongs to the UPF0391 family.

It is found in the cell membrane. The polypeptide is UPF0391 membrane protein lpl2443 (Legionella pneumophila (strain Lens)).